We begin with the raw amino-acid sequence, 191 residues long: Fe/S biogenesis protein NfuA (191 aa).

[4Fe-4S] cluster is bound by residues Cys-149 and Cys-152.

The protein belongs to the NfuA family. In terms of assembly, homodimer. The cofactor is [4Fe-4S] cluster.

Involved in iron-sulfur cluster biogenesis. Binds a 4Fe-4S cluster, can transfer this cluster to apoproteins, and thereby intervenes in the maturation of Fe/S proteins. Could also act as a scaffold/chaperone for damaged Fe/S proteins. The chain is Fe/S biogenesis protein NfuA from Salmonella paratyphi A (strain ATCC 9150 / SARB42).